A 353-amino-acid chain; its full sequence is S-adenosylmethionine:tRNA ribosyltransferase-isomerase (353 aa).

Belongs to the QueA family. Monomer.

It is found in the cytoplasm. The enzyme catalyses 7-aminomethyl-7-carbaguanosine(34) in tRNA + S-adenosyl-L-methionine = epoxyqueuosine(34) in tRNA + adenine + L-methionine + 2 H(+). It functions in the pathway tRNA modification; tRNA-queuosine biosynthesis. Transfers and isomerizes the ribose moiety from AdoMet to the 7-aminomethyl group of 7-deazaguanine (preQ1-tRNA) to give epoxyqueuosine (oQ-tRNA). The chain is S-adenosylmethionine:tRNA ribosyltransferase-isomerase from Baumannia cicadellinicola subsp. Homalodisca coagulata.